Here is a 266-residue protein sequence, read N- to C-terminus: Electron transfer flavoprotein subunit beta (266 aa).

Belongs to the ETF beta-subunit/FixA family. As to quaternary structure, heterodimer of an alpha and a beta subunit. FAD serves as cofactor. The cofactor is AMP.

Its function is as follows. The electron transfer flavoprotein serves as a specific electron acceptor for other dehydrogenases. It transfers the electrons to the main respiratory chain via ETF-ubiquinone oxidoreductase (ETF dehydrogenase). This chain is Electron transfer flavoprotein subunit beta (etfB), found in Mycobacterium bovis (strain ATCC BAA-935 / AF2122/97).